The sequence spans 225 residues: MQCLLLLPFLLLGTVSALHLENDAPHLESLETQADLGQDLDSSKEQERDLALTEEVIQAEGEEVKASACQDNFEDEEAMESDPAALDKDFQCPREEDIVEVQGSPRCKICRYLLVRTPKTFAEAQNVCSRCYGGNLVSIHDFNFNYRIQCCTSTVNQAQVWIGGNLRGWFLWKRFCWTDGSHWNFAYWSPGQPGNGQGSCVALCTKGGYWRRAQCDKQLPFVCSF.

The N-terminal stretch at M1 to A17 is a signal peptide. Residues C107–S224 enclose the C-type lectin domain. 2 disulfide bridges follow: C128/C223 and C200/C215.

Expressed in bone marrow. Not detected in placenta.

It is found in the cytoplasmic granule. Functionally, possesses similar cytotoxic and cytostimulatory activities to PRG2/MBP. In vitro, stimulates neutrophil superoxide production and IL8 release, and histamine and leukotriene C4 release from basophils. This chain is Proteoglycan 3, found in Homo sapiens (Human).